We begin with the raw amino-acid sequence, 151 residues long: Ribosomal RNA large subunit methyltransferase H (151 aa).

S-adenosyl-L-methionine is bound by residues leucine 73, glycine 100, and 119 to 124; that span reads LSDLTM.

The protein belongs to the RNA methyltransferase RlmH family. As to quaternary structure, homodimer.

It is found in the cytoplasm. The enzyme catalyses pseudouridine(1915) in 23S rRNA + S-adenosyl-L-methionine = N(3)-methylpseudouridine(1915) in 23S rRNA + S-adenosyl-L-homocysteine + H(+). Specifically methylates the pseudouridine at position 1915 (m3Psi1915) in 23S rRNA. The sequence is that of Ribosomal RNA large subunit methyltransferase H from Aliarcobacter butzleri (strain RM4018) (Arcobacter butzleri).